The chain runs to 448 residues: MTLFTQTQSNDRIFTVSSLNAEVRLLLENEMGIVWLVGELSNLSMPVSGHWYFTLKDSRAQVKCAMFRGNNRRVTFKPANGTQVLVKARLSLYEPRGDYQLIIESMQPEGDGRLQQQFEQLKMSLAAEGLFAQALKKPLPEQPKRIGIITSKTGAALHDILTVLHRRDPSLPVVIYPTMVQGDGSAISIAQAIGRANARQECDVLIVGRGGGSLEDLWAFNEEIVARTIAASQIPIVSAVGHEVDVTIADFVADMRAPTPSAAAELVSRDITHQTQKIQQKNQQLKNAIRTYLSKREAKTVQLTHRLERQHPQLRLNQQQQHLDDISSRLERAMGRLLSSHHQHVERINYKLSLHSPVQTIKNNQTTLDQRKRRLLDAMDHRLLNANHKLALAAEKLETVSPLATLSRGYSITRDAKGKVIRHIDQVKPGDKLVTKVTDGEIHSTVSE.

The protein belongs to the XseA family. In terms of assembly, heterooligomer composed of large and small subunits.

It is found in the cytoplasm. The enzyme catalyses Exonucleolytic cleavage in either 5'- to 3'- or 3'- to 5'-direction to yield nucleoside 5'-phosphates.. Functionally, bidirectionally degrades single-stranded DNA into large acid-insoluble oligonucleotides, which are then degraded further into small acid-soluble oligonucleotides. The sequence is that of Exodeoxyribonuclease 7 large subunit from Photobacterium profundum (strain SS9).